A 485-amino-acid chain; its full sequence is Glucagon receptor (485 aa).

The signal sequence occupies residues 1–26 (MPLTQLHCPHLLLLLLVLSCLPEAPS). The Extracellular portion of the chain corresponds to 27–137 (AQVMDFLFEK…EIEVQKGVAK (111 aa)). 3 disulfide bridges follow: cysteine 44–cysteine 68, cysteine 59–cysteine 101, and cysteine 82–cysteine 122. N-linked (GlcNAc...) asparagine glycosylation is found at asparagine 47, asparagine 60, asparagine 75, asparagine 79, and asparagine 118. Residues 138–162 (MYSSQQVMYTVGYSLSLGALLLALV) form a helical membrane-spanning segment. Over 163–174 (ILLGLRKLHCTR) the chain is Cytoplasmic. A helical membrane pass occupies residues 175–199 (NYIHGNLFASFVLKAGSVLVIDWLL). At 200–226 (KTRYSQKIGDDLSVSVWLSDGAMAGCR) the chain is on the extracellular side. Cysteine 225 and cysteine 295 are oxidised to a cystine. The chain crosses the membrane as a helical span at residues 227-250 (VATVIMQYGIIANYCWLLVEGVYL). Residues 251–264 (YSLLSLATFSERSF) lie on the Cytoplasmic side of the membrane. The helical transmembrane segment at 265-286 (FSLYLGIGWGAPLLFVIPWVVV) threads the bilayer. Topologically, residues 287–304 (KCLFENVQCWTSNDNMGF) are extracellular. The helical transmembrane segment at 305-327 (WWILRIPVFLALLINFFIFVHII) threads the bilayer. Residues 328-351 (HLLVAKLRAHQMHYADYKFRLARS) lie on the Cytoplasmic side of the membrane. The interval 351–354 (STLT) is important for allosteric inhibitor binding. A helical transmembrane segment spans residues 352–370 (TLTLIPLLGVHEVVFAFVT). The Extracellular segment spans residues 371–382 (DEHAQGTLRSTK). The chain crosses the membrane as a helical span at residues 383–403 (LFFDLFLSSFQGLLVAVLYCF). Residues 404–485 (LNKEVQAELM…SLPRLADSPT (82 aa)) lie on the Cytoplasmic side of the membrane. Over residues 457-475 (AGSSSGTGCVPSMETSLAS) the composition is skewed to polar residues. The segment at 457–485 (AGSSSGTGCVPSMETSLASSLPRLADSPT) is disordered. A phosphoserine mark is found at serine 460 and serine 476.

This sequence belongs to the G-protein coupled receptor 2 family. Post-translationally, ligand-binding promotes phosphorylation of serine residues in the C-terminal cytoplasmic domain. Phosphorylation is important for receptor endocytosis after ligand-binding. As to expression, expressed predominantly in liver, kidney, adrenal, lung and stomach, while lower levels of expression are detected in brown and white adipose tissue, cerebellum, duodenum and heart.

The protein localises to the cell membrane. In terms of biological role, G-protein coupled receptor for glucagon that plays a central role in the regulation of blood glucose levels and glucose homeostasis. Regulates the rate of hepatic glucose production by promoting glycogen hydrolysis and gluconeogenesis. Plays an important role in mediating the responses to fasting. Ligand binding causes a conformation change that triggers signaling via guanine nucleotide-binding proteins (G proteins) and modulates the activity of down-stream effectors, such as adenylate cyclase. Promotes activation of adenylate cyclase. Besides, plays a role in signaling via a phosphatidylinositol-calcium second messenger system. The protein is Glucagon receptor (Gcgr) of Mus musculus (Mouse).